Here is a 135-residue protein sequence, read N- to C-terminus: Hemoglobin subunit alpha (135 aa).

The 135-residue stretch at 1-135 (AAVVALWGKI…VALALAERYK (135 aa)) folds into the Globin domain. H52 contributes to the O2 binding site. A heme b-binding site is contributed by H81.

The protein belongs to the globin family. In terms of assembly, hb1 is a heterotetramer of two alpha chains and two beta-1 chains. Hb2 is a heterotetramer of two alpha chains and two beta-2 chains. Post-translationally, the N-terminus is blocked. In terms of tissue distribution, red blood cells.

Functionally, involved in oxygen transport from gills to the various peripheral tissues. The protein is Hemoglobin subunit alpha of Dissostichus eleginoides (Patagonian toothfish).